The following is a 306-amino-acid chain: Oligopeptide transport system permease protein OppB (306 aa).

The Cytoplasmic segment spans residues 1 to 8 (MLKFIFKR). Residues 9-29 (LLEALPTLFILITFSFFLMRL) form a helical membrane-spanning segment. The Periplasmic portion of the chain corresponds to 30–99 (APGSPFTSER…IASAFPVSIK (70 aa)). An ABC transmembrane type-1 domain is found at 94 to 293 (FPVSIKLGMV…TLTILFNAIV (200 aa)). A helical transmembrane segment spans residues 100–120 (LGMVAFAFAVVLGVTAGTLAA). The Cytoplasmic portion of the chain corresponds to 121–135 (LNQNSRWDYILMSFS). A helical membrane pass occupies residues 136 to 156 (MLGVIMPSFVFAPVLVLIFAI). Over 157–169 (YLGWLPAGGWNGG) the chain is Periplasmic. Residues 170–190 (TAMYMILPVASLTIAYVAGIA) form a helical membrane-spanning segment. Residues 191-229 (RIMRGSMIEVLHSNFIRTAKAKGLSMSRIILKHALRPAL) lie on the Cytoplasmic side of the membrane. Residues 230 to 250 (LPVITYLGPAFVGIITGSMVI) traverse the membrane as a helical segment. Over 251-279 (ESVFGLPGMGLLFVNGALNRDYSLVLSLT) the chain is Periplasmic. A helical membrane pass occupies residues 280 to 300 (ILVGTLTILFNAIVDILYAII). Residues 301-306 (DPKIRY) lie on the Cytoplasmic side of the membrane.

Belongs to the binding-protein-dependent transport system permease family. OppBC subfamily. The complex is composed of two ATP-binding proteins (OppD and OppF), two transmembrane proteins (OppB and OppC) and a solute-binding protein (OppA).

The protein localises to the cell inner membrane. Part of the ABC transporter complex OppABCDF involved in the uptake of oligopeptides. Probably responsible for the translocation of the substrate across the membrane. The protein is Oligopeptide transport system permease protein OppB (oppB) of Haemophilus influenzae (strain ATCC 51907 / DSM 11121 / KW20 / Rd).